Reading from the N-terminus, the 371-residue chain is Interstrand DNA cross-link repair glycosylase (371 aa).

A QXQ; important for activity motif is present at residues Gln-37–Gln-39.

This sequence belongs to the DNA glycosylase AlkZ-like family.

DNA glycosylase involved in the repair of interstrand DNA cross-links (ICLs), which are highly toxic DNA lesions that covalently tether the opposing strands of DNA, thereby inhibiting essential cellular processes such as DNA replication and transcription. Acts by unhooking both sides of the ICLs, forming abasic (AP) sites on both strands. AlkZ specifically repairs DNA damage induced by azinomycin B (AZB), a natural product with potent antibiotic and antitumor activities that interacts covalently with duplex DNA and forms ICLs. AlkZ thus confers self-resistance to azinomycin B, which is produced by S.sahachiroi. It may also protect target sites by protein-DNA interaction. Binds sequence non-specifically to native DNA and structure-specifically to azinomycin B-modified sites, with higher affinity to azinomycin B-modified sites and lower affinity to native DNA duplex. In vitro, also acts on monoadducts and can catalyze the excision of N7-methylguanine (7mGua) from an oligonucleotide containing N7-methyldeoxyguanosine (d7mG). Is a monofunctional DNA glycosylase that does not have lyase activity. The sequence is that of Interstrand DNA cross-link repair glycosylase from Streptomyces sahachiroi.